The chain runs to 619 residues: Chaperone protein HscA homolog (619 aa).

The protein belongs to the heat shock protein 70 family.

Functionally, chaperone involved in the maturation of iron-sulfur cluster-containing proteins. Has a low intrinsic ATPase activity which is markedly stimulated by HscB. This chain is Chaperone protein HscA homolog, found in Acinetobacter baumannii (strain AB0057).